Reading from the N-terminus, the 399-residue chain is CCA-adding enzyme (399 aa).

Positions 32 and 35 each coordinate ATP. Positions 32 and 35 each coordinate CTP. Residues Asp-45 and Asp-47 each coordinate Mg(2+). The ATP site is built by Arg-116, Asp-159, Arg-162, Arg-165, and Arg-168. Residues Arg-116, Asp-159, Arg-162, Arg-165, and Arg-168 each contribute to the CTP site.

Belongs to the tRNA nucleotidyltransferase/poly(A) polymerase family. Bacterial CCA-adding enzyme type 3 subfamily. Homodimer. Mg(2+) serves as cofactor.

It carries out the reaction a tRNA precursor + 2 CTP + ATP = a tRNA with a 3' CCA end + 3 diphosphate. The catalysed reaction is a tRNA with a 3' CCA end + 2 CTP + ATP = a tRNA with a 3' CCACCA end + 3 diphosphate. Its function is as follows. Catalyzes the addition and repair of the essential 3'-terminal CCA sequence in tRNAs without using a nucleic acid template. Adds these three nucleotides in the order of C, C, and A to the tRNA nucleotide-73, using CTP and ATP as substrates and producing inorganic pyrophosphate. tRNA 3'-terminal CCA addition is required both for tRNA processing and repair. Also involved in tRNA surveillance by mediating tandem CCA addition to generate a CCACCA at the 3' terminus of unstable tRNAs. While stable tRNAs receive only 3'-terminal CCA, unstable tRNAs are marked with CCACCA and rapidly degraded. This chain is CCA-adding enzyme, found in Streptococcus pneumoniae (strain CGSP14).